We begin with the raw amino-acid sequence, 195 residues long: Rubrerythrin (195 aa).

The Ferritin-like diiron domain maps to Met1–Lys150. Fe(3+) is bound by residues Glu20, Glu53, Glu98, Glu101, Glu132, His135, Cys162, Cys165, Cys178, and Cys181. The 39-residue stretch at Val157 to Tyr195 folds into the Rubredoxin-like domain.

Homodimer. Possesses two rubredoxin-like centers and two non-sulfur oxo-bridged di-iron centers per dimer. It depends on Fe(3+) as a cofactor.

The protein resides in the cytoplasm. Its function is as follows. May provide oxidative stress protection via catalytic reduction of intracellular hydrogen peroxide. This chain is Rubrerythrin (rbr), found in Clostridium perfringens (strain 13 / Type A).